Here is a 98-residue protein sequence, read N- to C-terminus: SPbeta prophage-derived uncharacterized protein YorB (98 aa).

The chain is SPbeta prophage-derived uncharacterized protein YorB (yorB) from Bacillus subtilis (strain 168).